The primary structure comprises 152 residues: SsrA-binding protein (152 aa).

Positions 132 to 142 (REAIKKRDVSD) are enriched in basic and acidic residues. The disordered stretch occupies residues 132 to 152 (REAIKKRDVSDQIRSSLRRSR).

Belongs to the SmpB family.

It is found in the cytoplasm. Functionally, required for rescue of stalled ribosomes mediated by trans-translation. Binds to transfer-messenger RNA (tmRNA), required for stable association of tmRNA with ribosomes. tmRNA and SmpB together mimic tRNA shape, replacing the anticodon stem-loop with SmpB. tmRNA is encoded by the ssrA gene; the 2 termini fold to resemble tRNA(Ala) and it encodes a 'tag peptide', a short internal open reading frame. During trans-translation Ala-aminoacylated tmRNA acts like a tRNA, entering the A-site of stalled ribosomes, displacing the stalled mRNA. The ribosome then switches to translate the ORF on the tmRNA; the nascent peptide is terminated with the 'tag peptide' encoded by the tmRNA and targeted for degradation. The ribosome is freed to recommence translation, which seems to be the essential function of trans-translation. The sequence is that of SsrA-binding protein from Bdellovibrio bacteriovorus (strain ATCC 15356 / DSM 50701 / NCIMB 9529 / HD100).